A 240-amino-acid polypeptide reads, in one-letter code: 7-cyano-7-deazaguanine synthase (240 aa).

9–19 (FSGGLDSTACL) lines the ATP pocket. Zn(2+) contacts are provided by Cys-195, Cys-210, Cys-213, and Cys-216.

The protein belongs to the QueC family. Zn(2+) serves as cofactor.

The catalysed reaction is 7-carboxy-7-deazaguanine + NH4(+) + ATP = 7-cyano-7-deazaguanine + ADP + phosphate + H2O + H(+). The protein operates within purine metabolism; 7-cyano-7-deazaguanine biosynthesis. Its function is as follows. Catalyzes the ATP-dependent conversion of 7-carboxy-7-deazaguanine (CDG) to 7-cyano-7-deazaguanine (preQ(0)). The sequence is that of 7-cyano-7-deazaguanine synthase from Pyrococcus furiosus (strain ATCC 43587 / DSM 3638 / JCM 8422 / Vc1).